The following is a 551-amino-acid chain: Protein MTL1 (551 aa).

A signal peptide spans 1–35; the sequence is MASCNPTRKKSSASSLSMWRTILMALTTLPLSVLS. Residues 36 to 361 are Extracellular-facing; the sequence is QELVPANSTT…HSGLSKKNRN (326 aa). Disordered regions lie at residues 108–143, 206–227, and 243–263; these read MQVS…IISS, PSSS…SYSS, and SSSS…SSSS. Residues 362–382 form a helical membrane-spanning segment; it reads IIIGCVVGIGAPLILILLILI. The Cytoplasmic portion of the chain corresponds to 383-551; sequence YMFCVQPKKT…PNNGLNITNY (169 aa). Residues 429 to 513 form a disordered region; sequence SSDSPIGSNN…SNSNSQDYND (85 aa). Polar residues predominate over residues 430-441; the sequence is SDSPIGSNNIQN. Acidic residues predominate over residues 466–477; sequence GYDDDDDDDAND. Ser481 and Ser482 each carry phosphoserine. Positions 498–508 are enriched in low complexity; sequence SASYSMSNSNS.

This sequence belongs to the MID2 like cell wall stress sensor family.

It is found in the membrane. In terms of biological role, involved in cell integrity signaling during vegetative growth at elevated temperature. Acts positively on the PKC1-MAPK pathway. Cell membrane sensor of oxidative stress in the cell integrity pathway upstream of PKC1. Required to transmit the oxidative signal to SLT2 and to restore the correct actin organization following oxidative stress. Multicopy suppressor of 1,3-beta-glucan synthase (GS) mutation. Also suppresses RGD1 null mutations. In Saccharomyces cerevisiae (strain ATCC 204508 / S288c) (Baker's yeast), this protein is Protein MTL1 (MTL1).